The following is a 204-amino-acid chain: Urease accessory protein UreG (204 aa).

Position 12 to 19 (12 to 19 (GPVGSGKT)) interacts with GTP.

It belongs to the SIMIBI class G3E GTPase family. UreG subfamily. In terms of assembly, homodimer. UreD, UreF and UreG form a complex that acts as a GTP-hydrolysis-dependent molecular chaperone, activating the urease apoprotein by helping to assemble the nickel containing metallocenter of UreC. The UreE protein probably delivers the nickel.

Its subcellular location is the cytoplasm. In terms of biological role, facilitates the functional incorporation of the urease nickel metallocenter. This process requires GTP hydrolysis, probably effectuated by UreG. The chain is Urease accessory protein UreG from Streptococcus salivarius (strain 57.I).